A 146-amino-acid chain; its full sequence is Large ribosomal subunit protein uL15 (146 aa).

Residues 1–58 form a disordered region; the sequence is MKLNELSPPKGARTARKRKGRGPGSGLGKTAGKGHKGQKARSGGGVRPGFEGGQMPVH. Composition is skewed to gly residues over residues 22 to 31 and 42 to 52; these read GPGSGLGKTA and SGGGVRPGFEG.

This sequence belongs to the universal ribosomal protein uL15 family. Part of the 50S ribosomal subunit.

Binds to the 23S rRNA. This Desulfatibacillum aliphaticivorans protein is Large ribosomal subunit protein uL15.